The sequence spans 253 residues: 3-deoxy-manno-octulosonate cytidylyltransferase (253 aa).

The protein belongs to the KdsB family.

It is found in the cytoplasm. The enzyme catalyses 3-deoxy-alpha-D-manno-oct-2-ulosonate + CTP = CMP-3-deoxy-beta-D-manno-octulosonate + diphosphate. The protein operates within nucleotide-sugar biosynthesis; CMP-3-deoxy-D-manno-octulosonate biosynthesis; CMP-3-deoxy-D-manno-octulosonate from 3-deoxy-D-manno-octulosonate and CTP: step 1/1. It participates in bacterial outer membrane biogenesis; lipopolysaccharide biosynthesis. Activates KDO (a required 8-carbon sugar) for incorporation into bacterial lipopolysaccharide in Gram-negative bacteria. The chain is 3-deoxy-manno-octulosonate cytidylyltransferase from Proteus mirabilis (strain HI4320).